Here is a 209-residue protein sequence, read N- to C-terminus: Imidazole glycerol phosphate synthase subunit HisH (209 aa).

Residues 4 to 209 (PVVVFEYGSG…RLLANWIGSL (206 aa)) form the Glutamine amidotransferase type-1 domain. The Nucleophile role is filled by C82. Catalysis depends on residues H190 and E192.

Heterodimer of HisH and HisF.

Its subcellular location is the cytoplasm. The enzyme catalyses 5-[(5-phospho-1-deoxy-D-ribulos-1-ylimino)methylamino]-1-(5-phospho-beta-D-ribosyl)imidazole-4-carboxamide + L-glutamine = D-erythro-1-(imidazol-4-yl)glycerol 3-phosphate + 5-amino-1-(5-phospho-beta-D-ribosyl)imidazole-4-carboxamide + L-glutamate + H(+). The catalysed reaction is L-glutamine + H2O = L-glutamate + NH4(+). The protein operates within amino-acid biosynthesis; L-histidine biosynthesis; L-histidine from 5-phospho-alpha-D-ribose 1-diphosphate: step 5/9. IGPS catalyzes the conversion of PRFAR and glutamine to IGP, AICAR and glutamate. The HisH subunit catalyzes the hydrolysis of glutamine to glutamate and ammonia as part of the synthesis of IGP and AICAR. The resulting ammonia molecule is channeled to the active site of HisF. The chain is Imidazole glycerol phosphate synthase subunit HisH from Leifsonia xyli subsp. xyli (strain CTCB07).